Here is a 27-residue protein sequence, read N- to C-terminus: Conotoxin flf14b (27 aa).

2 disulfides stabilise this stretch: C6-C26 and C10-C22.

In terms of tissue distribution, expressed by the venom duct.

The protein localises to the secreted. The chain is Conotoxin flf14b from Conus anabathrum floridanus (Florida cone).